Here is a 342-residue protein sequence, read N- to C-terminus: Anthranilate phosphoribosyltransferase (342 aa).

Residues Gly-79, Gly-82 to Asp-83, Thr-87, Asn-89 to Thr-92, Lys-107 to Ser-115, and Ser-119 contribute to the 5-phospho-alpha-D-ribose 1-diphosphate site. Anthranilate is bound at residue Gly-79. Ser-91 contacts Mg(2+). An anthranilate-binding site is contributed by Asn-110. Arg-165 contacts anthranilate. Mg(2+) contacts are provided by Asp-223 and Glu-224.

It belongs to the anthranilate phosphoribosyltransferase family. As to quaternary structure, homodimer. Mg(2+) is required as a cofactor.

It carries out the reaction N-(5-phospho-beta-D-ribosyl)anthranilate + diphosphate = 5-phospho-alpha-D-ribose 1-diphosphate + anthranilate. The protein operates within amino-acid biosynthesis; L-tryptophan biosynthesis; L-tryptophan from chorismate: step 2/5. In terms of biological role, catalyzes the transfer of the phosphoribosyl group of 5-phosphorylribose-1-pyrophosphate (PRPP) to anthranilate to yield N-(5'-phosphoribosyl)-anthranilate (PRA). In Buchnera aphidicola subsp. Acyrthosiphon pisum (strain 5A), this protein is Anthranilate phosphoribosyltransferase.